We begin with the raw amino-acid sequence, 613 residues long: Azole resistance protein 1 (613 aa).

Positions 1-38 (MKGEPKTYSMSDLSYYGEKAQQQNEKQQKQYVVRRNST) are disordered. At 1 to 70 (MKGEPKTYSM…PKGFILYASL (70 aa)) the chain is on the extracellular side. A helical transmembrane segment spans residues 71–91 (IALALSLFLAALDIMIVSTII). Topologically, residues 92–102 (EEVAKQFGSYS) are cytoplasmic. The helical transmembrane segment at 103 to 123 (EIGWLFTGYSLPNALLALIWG) threads the bilayer. The Extracellular segment spans residues 124–134 (RIATPIGFKET). The helical transmembrane segment at 135–155 (MLFAIVIFEIGSLISALANSM) threads the bilayer. Over 156–163 (SMLIGGRV) the chain is Cytoplasmic. A helical membrane pass occupies residues 164-184 (IAGVGGCGIQSLSFVIGSTLV). At 185 to 189 (EESQR) the chain is on the extracellular side. The helical transmembrane segment at 190–210 (GILIAVLSCSFAIASVVGPFL) threads the bilayer. Topologically, residues 211–221 (GGVFTSSVTWR) are cytoplasmic. A helical membrane pass occupies residues 222–242 (WCFYVNLPIGGLAFFLFLFFY). The Extracellular segment spans residues 243–298 (NPGLSTFQETMDNIRKFPSQFIEIVRNVAYHLLKIKGFSKLNGWRKPFMELIFMYD). The chain crosses the membrane as a helical span at residues 299 to 319 (IIEFVFCSAGFTCILLAFTFG). The Cytoplasmic portion of the chain corresponds to 320–329 (GNRYAWNSAS). Residues 330–350 (IIILFIIGIVLVVLAGIYDFL) form a helical membrane-spanning segment. Residues 351 to 375 (VFPKFNIVKATPHYQPLMSWTNIKK) are Extracellular-facing. The helical transmembrane segment at 376–396 (PGIFTVNIALFLTCAGYISQF) threads the bilayer. Residues 397 to 414 (TYIVQYFQLIYNDSAWRA) lie on the Cytoplasmic side of the membrane. A helical transmembrane segment spans residues 415–435 (AVHLVACIISTVVTAILCGAI). Topologically, residues 436–443 (TDKTRQIK) are extracellular. Residues 444-464 (PIIVISSIFGVVGAGILTLLN) form a helical membrane-spanning segment. At 465–472 (NNANNSAH) the chain is on the cytoplasmic side. The helical transmembrane segment at 473–493 (IGLLILPGVAFGGLAQSSMLA) threads the bilayer. The Extracellular segment spans residues 494–581 (SQIQLDKKSP…SKLGNIISES (88 aa)). A helical membrane pass occupies residues 582-602 (LTDVFYMALGFYALSLIFAVF). The Cytoplasmic segment spans residues 603–613 (ASNKKVTASLR).

It belongs to the major facilitator superfamily.

Its subcellular location is the cell membrane. Its function is as follows. Transporter protein required for adaptation to high stress imposed by low-chain organic acids, in particular by acetic acid, and for resistance to azoles, especially to ketoconazole and fluconazole. This Saccharomyces cerevisiae (strain ATCC 204508 / S288c) (Baker's yeast) protein is Azole resistance protein 1 (AZR1).